The chain runs to 117 residues: Big defensin (117 aa).

The first 23 residues, Met1 to Gly23, serve as a signal peptide directing secretion. Residues Met26 to Gln36 constitute a propeptide that is removed on maturation. Intrachain disulfides connect Cys83–Cys113, Cys90–Cys108, and Cys94–Cys114.

This sequence belongs to the big defensin family. As to quaternary structure, interacts with intracellular coagulation inhibitor 1/LICI-1. As to expression, expressed in all tissues examined, including hemocytes, heart, hepatopancreas, stomach, intestine and skeletal muscle.

It localises to the secreted. Significantly inhibits the growth of Gram-negative and Gram-positive bacteria and fungi in vitro. In Tachypleus tridentatus (Japanese horseshoe crab), this protein is Big defensin.